Consider the following 462-residue polypeptide: Trigger factor (462 aa).

The PPIase FKBP-type domain maps to G172 to T257. A disordered region spans residues L443–V462. Positions L444–A455 are enriched in acidic residues.

This sequence belongs to the FKBP-type PPIase family. Tig subfamily.

It is found in the cytoplasm. It catalyses the reaction [protein]-peptidylproline (omega=180) = [protein]-peptidylproline (omega=0). Its function is as follows. Involved in protein export. Acts as a chaperone by maintaining the newly synthesized protein in an open conformation. Functions as a peptidyl-prolyl cis-trans isomerase. The protein is Trigger factor of Methylocella silvestris (strain DSM 15510 / CIP 108128 / LMG 27833 / NCIMB 13906 / BL2).